Reading from the N-terminus, the 534-residue chain is UDP-glucuronosyltransferase 2A3 (534 aa).

A signal peptide spans 1–18 (MVSEKCVAAFFLLQLCWA). Over 19–493 (GCGFCSKVLV…SWFQYHSLDV (475 aa)) the chain is Extracellular. N-linked (GlcNAc...) asparagine glycosylation occurs at Asn102. Lys135 bears the N6-succinyllysine mark. N-linked (GlcNAc...) asparagine glycosylation is present at Asn204. Residues 494 to 514 (IGFLLLCVVTLTFIITKFCLF) traverse the membrane as a helical segment. The Cytoplasmic segment spans residues 515 to 534 (VCQKLYMKESKKMGNRKKKN).

This sequence belongs to the UDP-glycosyltransferase family. Highly expressed in liver, with lower levels in duodenum and jejunum.

It localises to the membrane. It catalyses the reaction glucuronate acceptor + UDP-alpha-D-glucuronate = acceptor beta-D-glucuronoside + UDP + H(+). In terms of biological role, UDP-glucuronosyltransferases catalyze phase II biotransformation reactions in which lipophilic substrates are conjugated with glucuronic acid to increase water solubility and enhance excretion. They are of major importance in the conjugation and subsequent elimination of potentially toxic xenobiotics and endogenous compounds. The chain is UDP-glucuronosyltransferase 2A3 (Ugt2a3) from Mus musculus (Mouse).